A 179-amino-acid chain; its full sequence is Large ribosomal subunit protein uL5 (179 aa).

The protein belongs to the universal ribosomal protein uL5 family. In terms of assembly, part of the 50S ribosomal subunit; part of the 5S rRNA/L5/L18/L25 subcomplex. Contacts the 5S rRNA and the P site tRNA. Forms a bridge to the 30S subunit in the 70S ribosome.

Functionally, this is one of the proteins that bind and probably mediate the attachment of the 5S RNA into the large ribosomal subunit, where it forms part of the central protuberance. In the 70S ribosome it contacts protein S13 of the 30S subunit (bridge B1b), connecting the 2 subunits; this bridge is implicated in subunit movement. Contacts the P site tRNA; the 5S rRNA and some of its associated proteins might help stabilize positioning of ribosome-bound tRNAs. The sequence is that of Large ribosomal subunit protein uL5 from Bacillus velezensis (strain DSM 23117 / BGSC 10A6 / LMG 26770 / FZB42) (Bacillus amyloliquefaciens subsp. plantarum).